The chain runs to 475 residues: Rho GTPase-activating protein 15 (475 aa).

Over residues Met-1–Gly-22 the composition is skewed to polar residues. The segment at Met-1–Ala-23 is disordered. 5 positions are modified to phosphoserine: Ser-43, Ser-103, Ser-196, Ser-199, and Ser-243. One can recognise a PH domain in the interval Met-79–Asp-189. Residues Ser-281–Phe-470 form the Rho-GAP domain.

As to expression, expressed in lung, liver and lymphoid cells.

It is found in the cytoplasm. The protein resides in the membrane. Its function is as follows. GTPase activator for the Rho-type GTPases by converting them to an inactive GDP-bound state. Has activity toward RAC1. Overexpression results in an increase in actin stress fibers and cell contraction. This is Rho GTPase-activating protein 15 (ARHGAP15) from Homo sapiens (Human).